Reading from the N-terminus, the 404-residue chain is Cytochrome P450 monooxygenase avaI (404 aa).

Residue Cys382 participates in heme binding.

Belongs to the cytochrome P450 family. It depends on heme as a cofactor.

Its pathway is secondary metabolite biosynthesis. Cytochrome P450 monooxygenase; part of the cluster that mediates the biosynthesis of a highly modified cyclo-arginine-tryptophan dipeptide (cRW). The first step of the pathway is perfornmed by the arginine-containing cyclodipeptide synthase (RCPDS) avaA that acts as the scaffold-generating enzyme and is responsible for formation of the cyclo-Arg-Trp (cRW) diketopiperazine. AvaB then acts as a multifunctional flavoenzyme that is responsible for generating the cyclo-Arg-formylkynurenine DKP, which can be deformylated by avaC. AvaB then further catalyzes an additional N-oxidation followed by cyclization and dehydration. The next step is an N-acetylation of the guanidine group catalyzed by the arginine N-acetyltransferase avaD. The roles of the additional enzymes identified within the ava cluster still have to be determined. This is Cytochrome P450 monooxygenase avaI from Aspergillus versicolor.